Here is a 1246-residue protein sequence, read N- to C-terminus: Stromal processing peptidase, chloroplastic (1246 aa).

The transit peptide at 1-136 directs the protein to the chloroplast; the sequence is MASFPSPPLA…AKIRRRHVLH (136 aa). A Zn(2+)-binding site is contributed by histidine 228. Glutamate 231 serves as the catalytic Proton acceptor. Residue histidine 232 coordinates Zn(2+). Glutamate 302 is a catalytic residue. Glutamate 309 is a Zn(2+) binding site.

The protein belongs to the peptidase M16 family. It depends on Zn(2+) as a cofactor.

It localises to the plastid. The protein resides in the chloroplast stroma. In terms of biological role, cleaves presequences (transit peptides) from chloroplastic protein precursors. Initially recognizes a precursor by binding to the C-terminus of its transit peptide and then removes the transit peptide in a single endoproteolytic step. In a next step, pursues the cleavage of transit peptide to a subfragment form. The protein is Stromal processing peptidase, chloroplastic of Oryza sativa subsp. japonica (Rice).